The following is an 87-amino-acid chain: MNLSIFLFLIGILGFILNRKNIILMIIAIEIMLLAVTLLVLISSFGFDDNVGQTFSLYIISIAGAESVIGLSILVAFYRLFLVLNYL.

3 helical membrane-spanning segments follow: residues 1–21, 22–42, and 57–77; these read MNLS…NRKN, IILM…LVLI, and LYII…LVAF.

This sequence belongs to the complex I subunit 4L family. In terms of assembly, core subunit of respiratory chain NADH dehydrogenase (Complex I) which is composed of 45 different subunits.

The protein resides in the mitochondrion inner membrane. The catalysed reaction is a ubiquinone + NADH + 5 H(+)(in) = a ubiquinol + NAD(+) + 4 H(+)(out). Functionally, core subunit of the mitochondrial membrane respiratory chain NADH dehydrogenase (Complex I) which catalyzes electron transfer from NADH through the respiratory chain, using ubiquinone as an electron acceptor. The chain is NADH-ubiquinone oxidoreductase chain 4L (ND4L) from Moniliophthora perniciosa (strain FA553 / isolate CP02) (Witches'-broom disease fungus).